Consider the following 252-residue polypeptide: tRNA pseudouridine synthase A (252 aa).

Aspartate 51 functions as the Nucleophile in the catalytic mechanism. Tyrosine 105 serves as a coordination point for substrate.

The protein belongs to the tRNA pseudouridine synthase TruA family.

It catalyses the reaction uridine(38/39/40) in tRNA = pseudouridine(38/39/40) in tRNA. Formation of pseudouridine at positions 38, 39 and 40 in the anticodon stem and loop of transfer RNAs. The sequence is that of tRNA pseudouridine synthase A from Thermoplasma acidophilum (strain ATCC 25905 / DSM 1728 / JCM 9062 / NBRC 15155 / AMRC-C165).